The primary structure comprises 123 residues: Large ribosomal subunit protein uL18 (123 aa).

The protein belongs to the universal ribosomal protein uL18 family. In terms of assembly, part of the 50S ribosomal subunit; part of the 5S rRNA/L5/L18/L25 subcomplex. Contacts the 5S and 23S rRNAs.

This is one of the proteins that bind and probably mediate the attachment of the 5S RNA into the large ribosomal subunit, where it forms part of the central protuberance. In Wolbachia sp. subsp. Brugia malayi (strain TRS), this protein is Large ribosomal subunit protein uL18.